The sequence spans 175 residues: Nascent polypeptide-associated complex subunit beta (175 aa).

2 disordered regions span residues 1-36 (MDKE…SQGD) and 129-175 (RQAA…EELE). In terms of domain architecture, NAC-A/B spans 34-101 (QGDDRKLQAA…GQTKELTELV (68 aa)). Residues 149 to 163 (EGDDEIPDLVDNFDE) are compositionally biased toward acidic residues. Over residues 164–175 (AEVKKSDLEELE) the composition is skewed to basic and acidic residues.

Belongs to the NAC-beta family. In terms of assembly, part of the nascent polypeptide-associated complex (NAC), consisting of EGD2 and EGD1. NAC associates with ribosomes via EGD1.

It localises to the cytoplasm. The protein resides in the nucleus. In terms of biological role, component of the nascent polypeptide-associated complex (NAC), a dynamic component of the ribosomal exit tunnel, protecting the emerging polypeptides from interaction with other cytoplasmic proteins to ensure appropriate nascent protein targeting. The NAC complex also promotes mitochondrial protein import by enhancing productive ribosome interactions with the outer mitochondrial membrane and blocks the inappropriate interaction of ribosomes translating non-secretory nascent polypeptides with translocation sites in the membrane of the endoplasmic reticulum. EGD1 may act as a transcription factor that exert a negative effect on the expression of several genes that are transcribed by RNA polymerase II. The chain is Nascent polypeptide-associated complex subunit beta (EGD1) from Cryptococcus neoformans var. neoformans serotype D (strain B-3501A) (Filobasidiella neoformans).